The following is a 250-amino-acid chain: Hydroxyacylglutathione hydrolase (250 aa).

7 residues coordinate Zn(2+): histidine 53, histidine 55, aspartate 57, histidine 58, histidine 111, aspartate 128, and histidine 166.

It belongs to the metallo-beta-lactamase superfamily. Glyoxalase II family. In terms of assembly, monomer. Zn(2+) is required as a cofactor.

The enzyme catalyses an S-(2-hydroxyacyl)glutathione + H2O = a 2-hydroxy carboxylate + glutathione + H(+). It functions in the pathway secondary metabolite metabolism; methylglyoxal degradation; (R)-lactate from methylglyoxal: step 2/2. Thiolesterase that catalyzes the hydrolysis of S-D-lactoyl-glutathione to form glutathione and D-lactic acid. The chain is Hydroxyacylglutathione hydrolase from Methylobacillus flagellatus (strain ATCC 51484 / DSM 6875 / VKM B-1610 / KT).